Reading from the N-terminus, the 346-residue chain is Annexin A1 (346 aa).

At A2 the chain carries N-acetylalanine. S5 carries the post-translational modification Phosphoserine; by TRPM7. Q19 participates in a covalent cross-link: Isoglutamyl lysine isopeptide (Gln-Lys) (interchain with K-?). Y21 carries the post-translational modification Phosphotyrosine; by EGFR. A phosphoserine mark is found at S34 and S37. Residue T41 is modified to Phosphothreonine. Annexin repeat units lie at residues 42–113 (FNPS…ALLK), 114–185 (TPAQ…SLAK), 197–269 (DLAD…VIVK), and 273–344 (SQPM…ALCG). An N6-acetyllysine modification is found at K58. Residues G59, V60, E62, K97, L100, E105, M127, G129, G131, T132, and E134 each coordinate Ca(2+). T136 carries the post-translational modification Phosphothreonine. 3 residues coordinate Ca(2+): D171, G210, and R213. A Glycyl lysine isopeptide (Lys-Gly) (interchain with G-Cter in SUMO1); alternate cross-link involves residue K214. K214 participates in a covalent cross-link: Glycyl lysine isopeptide (Lys-Gly) (interchain with G-Cter in SUMO2); alternate. Residue G215 participates in Ca(2+) binding. At K239 the chain carries N6-acetyllysine. The Ca(2+) site is built by D253, E255, and L256. Residue K257 forms a Glycyl lysine isopeptide (Lys-Gly) (interchain with G-Cter in SUMO1) linkage. Residues E261, M286, G288, and G290 each contribute to the Ca(2+) site. At K312 the chain carries N6-acetyllysine. C324 and C343 are oxidised to a cystine. Positions 328, 330, and 331 each coordinate Ca(2+). K332 is covalently cross-linked (Glycyl lysine isopeptide (Lys-Gly) (interchain with G-Cter in SUMO1)). E336 contributes to the Ca(2+) binding site.

This sequence belongs to the annexin family. As to quaternary structure, homodimer; non-covalently linked. Homodimer; linked by transglutamylation. Homodimers linked by transglutamylation are observed in placenta, but not in other tissues. Interacts with S100A11. Heterotetramer, formed by two molecules each of S100A11 and ANXA1. Interacts with DYSF. Interacts with EGFR. Post-translationally, phosphorylated by protein kinase C, EGFR and TRPM7. Phosphorylated in response to EGF treatment. Sumoylated. In terms of processing, proteolytically cleaved by cathepsin CTSG to release the active N-terminal peptide Ac2-26. In terms of tissue distribution, detected on surface epithelia and mucosal glands in nasal cavity, trachea, bronchi and bronchioles. Detected in blood vessel endothelial cells. Detected in neutrophils (at protein level).

The protein resides in the nucleus. It localises to the cytoplasm. It is found in the cell projection. The protein localises to the cilium. Its subcellular location is the basolateral cell membrane. The protein resides in the lateral cell membrane. It localises to the cell membrane. It is found in the apical cell membrane. The protein localises to the membrane. Its subcellular location is the endosome membrane. The protein resides in the secreted. It localises to the extracellular space. It is found in the early endosome. The protein localises to the cytoplasmic vesicle membrane. Its subcellular location is the extracellular exosome. The protein resides in the cytoplasmic vesicle. It localises to the secretory vesicle lumen. It is found in the phagocytic cup. Its function is as follows. Plays important roles in the innate immune response as effector of glucocorticoid-mediated responses and regulator of the inflammatory process. Has anti-inflammatory activity. Plays a role in glucocorticoid-mediated down-regulation of the early phase of the inflammatory response. Contributes to the adaptive immune response by enhancing signaling cascades that are triggered by T-cell activation, regulates differentiation and proliferation of activated T-cells. Promotes the differentiation of T-cells into Th1 cells and negatively regulates differentiation into Th2 cells. Has no effect on unstimulated T-cells. Negatively regulates hormone exocytosis via activation of the formyl peptide receptors and reorganization of the actin cytoskeleton. Has high affinity for Ca(2+) and can bind up to eight Ca(2+) ions. Displays Ca(2+)-dependent binding to phospholipid membranes. Plays a role in the formation of phagocytic cups and phagosomes. Plays a role in phagocytosis by mediating the Ca(2+)-dependent interaction between phagosomes and the actin cytoskeleton. Functions at least in part by activating the formyl peptide receptors and downstream signaling cascades. Promotes chemotaxis of granulocytes and monocytes via activation of the formyl peptide receptors. Promotes rearrangement of the actin cytoskeleton, cell polarization and cell migration. Promotes resolution of inflammation and wound healing. Acts via neutrophil N-formyl peptide receptors to enhance the release of CXCL2. This Bos taurus (Bovine) protein is Annexin A1 (ANXA1).